The sequence spans 262 residues: 5'-nucleotidase SurE (262 aa).

Positions 9, 10, 40, and 95 each coordinate a divalent metal cation.

It belongs to the SurE nucleotidase family. The cofactor is a divalent metal cation.

It is found in the cytoplasm. The catalysed reaction is a ribonucleoside 5'-phosphate + H2O = a ribonucleoside + phosphate. In terms of biological role, nucleotidase that shows phosphatase activity on nucleoside 5'-monophosphates. The chain is 5'-nucleotidase SurE from Aliarcobacter butzleri (strain RM4018) (Arcobacter butzleri).